The sequence spans 320 residues: Lipoyl synthase (320 aa).

Cys56, Cys61, Cys67, Cys82, Cys86, Cys89, and Ser295 together coordinate [4Fe-4S] cluster. The Radical SAM core domain maps to 68 to 284; that stretch reads WNRRTATFMI…REEALKRGFA (217 aa). The segment at 300–320 is disordered; sequence EQSAQAVARRTGAGRAAQTGD. The span at 303-320 shows a compositional bias: low complexity; that stretch reads AQAVARRTGAGRAAQTGD.

The protein belongs to the radical SAM superfamily. Lipoyl synthase family. [4Fe-4S] cluster is required as a cofactor.

Its subcellular location is the cytoplasm. It carries out the reaction [[Fe-S] cluster scaffold protein carrying a second [4Fe-4S](2+) cluster] + N(6)-octanoyl-L-lysyl-[protein] + 2 oxidized [2Fe-2S]-[ferredoxin] + 2 S-adenosyl-L-methionine + 4 H(+) = [[Fe-S] cluster scaffold protein] + N(6)-[(R)-dihydrolipoyl]-L-lysyl-[protein] + 4 Fe(3+) + 2 hydrogen sulfide + 2 5'-deoxyadenosine + 2 L-methionine + 2 reduced [2Fe-2S]-[ferredoxin]. It functions in the pathway protein modification; protein lipoylation via endogenous pathway; protein N(6)-(lipoyl)lysine from octanoyl-[acyl-carrier-protein]: step 2/2. Functionally, catalyzes the radical-mediated insertion of two sulfur atoms into the C-6 and C-8 positions of the octanoyl moiety bound to the lipoyl domains of lipoate-dependent enzymes, thereby converting the octanoylated domains into lipoylated derivatives. The protein is Lipoyl synthase of Symbiobacterium thermophilum (strain DSM 24528 / JCM 14929 / IAM 14863 / T).